We begin with the raw amino-acid sequence, 402 residues long: Phosphoglycerate kinase (402 aa).

Substrate-binding positions include 24 to 26 (DFN), Arg40, 63 to 66 (HFGR), Arg122, and Arg155. Residues Lys206, Gly297, Glu328, and 357–360 (GGDS) contribute to the ATP site.

The protein belongs to the phosphoglycerate kinase family. As to quaternary structure, monomer.

The protein localises to the cytoplasm. It carries out the reaction (2R)-3-phosphoglycerate + ATP = (2R)-3-phospho-glyceroyl phosphate + ADP. Its pathway is carbohydrate degradation; glycolysis; pyruvate from D-glyceraldehyde 3-phosphate: step 2/5. This chain is Phosphoglycerate kinase, found in Prochlorococcus marinus (strain SARG / CCMP1375 / SS120).